A 1115-amino-acid polypeptide reads, in one-letter code: MNAESTMFPHIFLALLALISHIEAFNFMPRPSRVINSPKHLKFHINQTRSSYFGYTLVIRQTSIIVGAPRAQSTLESQRTINETGAIYRCSLTNGVCSPYVLDSRGNVDAPYSEYTFDSERKDFQWLGGSMDGGTKDTDKLLVCAPRFYAPSSRDNHLHGVCYWVNNTVASTPQHVTRISPLRLKSEQVKEEDNGNKASFFYIMGELGLSAHVADDNTKFLIGAPGINTWRGSVILYRQVDPVDNPTASRRDTSKALRRTYRDVDSNDYTPEHYAPEIPTPGLWGQEEDSYFGYAVSSGFFDSSNPTKLLYVATAPQANKQSGEAYIFDVRGKSIHKYHVFRGEQFGEYFGYSVLAEDLNGDGKTDVIVSAPQHALEDSHDNGAIYVFINKGFFNFERQILRSPVETMARFGTALSRLGDINHDGYNDVAVGAPFAGNGTVFIYLGSENGLRDQPSQRLDAPSQQPSKYGSHMFGHGLSRGSDIDGNGFNDFAIGAPNAEAVYLYRAYPVVKVHATVKSESREIKPEQEKVKITACYRLSTTSTDKLVQEQELAIRIAMDKQLKRVKFTQTQTNEISFKVNANFGEQCRDFETQVRYSEKDIFTPIDLEMHYELTKKVPDSEEFCETCAIVDPTEPKVSTQNIIFSTGCATDVCTADLQLRSKDVSPTYILGSADTLRLNYEITNIGETAYLPQFNVTSTSRLAFAQVPGNCKVVDAVMVCDLNRGRPLAKGDTDSVTISFDVSQLSGQSLIIHAEVFSTGYEQNPTDNRQTNVIGLKEFTEIDASGGQTNSQIDLEHYSNSAEIVNNYEIKSNGPSVIEQLTVSFYIPIAYKVAGSTAIIPIINVTSLKMQASYDSQLLSIDLYDQNNTMLVVDPVEVTTTLSGGLERTVITQNRQSYDIHTSGHVHQTMEVLDTSMVATASMSRKRRDLKALTANREQYARISNVKAHDLLSDDFKGKLPVNRTIVFNCRDPEMTICVRAEMRVHFRPEKSINLNMRYSVDLNEVNAILVDPWEYFVILTDLKLQKKGDPTSTSFSINRRIEPNIISKHQETGLPIWIIIVSVIGGLLLLSAISYLLYKFGFFNRTKKDELDRLVQQNPVEPEAENLNSGGNN.

The N-terminal stretch at 1–24 is a signal peptide; it reads MNAESTMFPHIFLALLALISHIEA. Residues 25 to 1054 are Extracellular-facing; the sequence is FNFMPRPSRV…PNIISKHQET (1030 aa). 7 FG-GAP repeats span residues 39-99, 113-174, 193-246, 278-335, 336-397, 398-453, and 460-522; these read KHLK…VCSP, SEYT…STPQ, DNGN…VDNP, IPTP…GKSI, HKYH…FNFE, RQIL…GLRD, and DAPS…SESR. N-linked (GlcNAc...) asparagine glycosylation is found at asparagine 46, asparagine 82, and asparagine 166. The N-linked (GlcNAc...) asparagine glycan is linked to asparagine 438. Asparagine 696, asparagine 845, asparagine 868, and asparagine 964 each carry an N-linked (GlcNAc...) asparagine glycan. Residues 1055 to 1075 form a helical membrane-spanning segment; it reads GLPIWIIIVSVIGGLLLLSAI. At 1076 to 1115 the chain is on the cytoplasmic side; it reads SYLLYKFGFFNRTKKDELDRLVQQNPVEPEAENLNSGGNN.

This sequence belongs to the integrin alpha chain family. As to quaternary structure, heterodimer of an alpha and a beta subunit. The alpha subunit is composed of a heavy and a light chain linked by a disulfide bond. Interacts with mys/beta-PS and Itgbn. In terms of tissue distribution, expressed in embryonic and larval hemocytes (at protein level). Expressed in tissues undergoing invagination, tissue movement and morphogenesis such as salivary gland, trachea, midgut endoderm, dorsal vessel, midline of the ventral nerve cord, amnioserosa and the amnioproctodeal invagination. Expressed in the mushroom body neuropil, brain areas that contain mushroom body processes in synaptic contact with other neurons. In egg chambers, expressed in border cells, in stretch cells and in dorsal appendage primordia.

The protein localises to the apical cell membrane. It is found in the lateral cell membrane. It localises to the cytoplasm. Functionally, integrin alpha-PS3/beta-PS is a receptor for laminin. Also binds to wb. Important during embryogenesis for the development of the trachea, dorsal vessel and salivary gland, as well as for dorsal closure. Required for short-term memory processes. Minor involvement in the establishment of the oocyte anterior-posterior length. Plays a role in timely border cell migration during oogenesis, probably mediated by JNK signaling. Integrin alpha-PS3/Itgbn is required for effective phagocytosis of apoptotic cells during embryonic development and for the phagocytic elimination of S.aureus by mediating the binding of S.aureus peptidoglycan to larval hemocytes, which probably activates a signaling pathway involving Rac1 and Rac2. Integrin alpha-PS3/Itgbn also regulates Fak activity during neuromuscular junction (NMJ) growth and is required for its activation in presynapsis of NMJs. Seems to be dispensable for major morphogenetic processes. This Drosophila melanogaster (Fruit fly) protein is Integrin alpha-PS3 (scb).